The chain runs to 176 residues: NAD(P)H-quinone oxidoreductase subunit 6, chloroplastic (176 aa).

The next 5 membrane-spanning stretches (helical) occupy residues 10-30, 32-52, 61-81, 92-112, and 152-172; these read ILLVFLGSGLILGGLGVVLLT, PIYSAFSLGLVLVCISLFHIP, AQLLIYVGAVNVLIVFAVMFM, LWTVGDGVTSLVCTSILFSLI, and FYLPFELISIILLVALIGAIS.

It belongs to the complex I subunit 6 family. As to quaternary structure, NDH is composed of at least 16 different subunits, 5 of which are encoded in the nucleus.

It localises to the plastid. It is found in the chloroplast thylakoid membrane. It carries out the reaction a plastoquinone + NADH + (n+1) H(+)(in) = a plastoquinol + NAD(+) + n H(+)(out). It catalyses the reaction a plastoquinone + NADPH + (n+1) H(+)(in) = a plastoquinol + NADP(+) + n H(+)(out). Functionally, NDH shuttles electrons from NAD(P)H:plastoquinone, via FMN and iron-sulfur (Fe-S) centers, to quinones in the photosynthetic chain and possibly in a chloroplast respiratory chain. The immediate electron acceptor for the enzyme in this species is believed to be plastoquinone. Couples the redox reaction to proton translocation, and thus conserves the redox energy in a proton gradient. In Liriodendron tulipifera (Tuliptree), this protein is NAD(P)H-quinone oxidoreductase subunit 6, chloroplastic (ndhG).